The chain runs to 226 residues: MTDLSPVLTIDGPSGAGKGTVSRIVAARLGWHYLDSGALYRAVGVAASWADLDVSDPAALVRCAFDTKVEFDEAGEAGLRVLVNGVDATSELRLETTGALASAIAAIPEVRSALKERQRAFRQPPGLVADGRDMGTVIFPDAAFKVFLTASAEERAGRRHKQLMEKGVSVIFDDLLREIMARDARDAQRVVAPLRPAEDAVLIDTSGIGIEDVVQRVVGLLDSRTP.

12–20 (GPSGAGKGT) is a binding site for ATP.

Belongs to the cytidylate kinase family. Type 1 subfamily.

The protein localises to the cytoplasm. The catalysed reaction is CMP + ATP = CDP + ADP. The enzyme catalyses dCMP + ATP = dCDP + ADP. This is Cytidylate kinase from Xanthomonas campestris pv. campestris (strain 8004).